Consider the following 287-residue polypeptide: Large ribosomal subunit protein uL2 (287 aa).

The disordered stretch occupies residues 221–287 (RGSVMNPCDH…SKRSRGGRDS (67 aa)). A compositionally biased stretch (basic residues) spans 258–287 (KTRKKNKPSNKLVVRRRRRVSKRSRGGRDS).

Belongs to the universal ribosomal protein uL2 family. As to quaternary structure, part of the 50S ribosomal subunit. Forms a bridge to the 30S subunit in the 70S ribosome.

One of the primary rRNA binding proteins. Required for association of the 30S and 50S subunits to form the 70S ribosome, for tRNA binding and peptide bond formation. It has been suggested to have peptidyltransferase activity; this is somewhat controversial. Makes several contacts with the 16S rRNA in the 70S ribosome. The sequence is that of Large ribosomal subunit protein uL2 from Prochlorococcus marinus (strain AS9601).